The chain runs to 25 residues: Caerin-2.4 (25 aa).

Expressed by the skin parotoid and/or rostral glands.

The protein resides in the secreted. Antibacterial peptide, that adopts an alpha helical conformation which can disrupt bacterial membranes. Each caerin displays a different antimicrobial specificity. This chain is Caerin-2.4, found in Ranoidea caerulea (Green tree frog).